The following is an 85-amino-acid chain: Small ribosomal subunit protein uS17 (85 aa).

It belongs to the universal ribosomal protein uS17 family. As to quaternary structure, part of the 30S ribosomal subunit.

Its function is as follows. One of the primary rRNA binding proteins, it binds specifically to the 5'-end of 16S ribosomal RNA. This is Small ribosomal subunit protein uS17 from Spiroplasma citri.